Reading from the N-terminus, the 491-residue chain is MGDRGGAGGTRRRRTGSRPSSHGGGGPAAAEEEVRDAAAGPDMGAAGDAPAPAPSKDADDGVASGHWELRCHRLQDSLFSSDSGFNNYRGILNWCVVMLILSNARLFLENLIKYGILVDPIQVVSLFLKDPYSWPAPCLVIAANVFAVAAFQVEKRLAVGALTEQAGLLLHVANLATILCFPAAVVLLVESITPVGSLLALMVHTILFLKLFSYRDVNLWCRRARAKAASAGKRASSAAAPHTVSYPDNLTYRDLYYFLFAPTLCYELNFPRSPRIRKRFLLRRILEMLFFTQLQVGLIQQWMVPTIQNSMKPFKDMDYSRIIERLLKLAVPNHLIWLIFFYWLFHSCLNAVAELMQFGDREFYRDWWNSESVTYFWQNWNIPVHKWCIRHFYKPMLRRGSSRWMARIGVFLASAFFHEYLVSVPLRMFRLWAFTGMMAQIPLAWFVGRFFQGNYGNAAVWLTLIIGQPIAVLMYVHDYYVLNYEAPVAGA.

The disordered stretch occupies residues 1–60; the sequence is MGDRGGAGGTRRRRTGSRPSSHGGGGPAAAEEEVRDAAAGPDMGAAGDAPAPAPSKDADD. Topologically, residues 1–86 are cytoplasmic; sequence MGDRGGAGGT…SLFSSDSGFN (86 aa). Residues 1-94 are involved in homomerization; it reads MGDRGGAGGT…FNNYRGILNW (94 aa). 2 positions are modified to phosphoserine: Ser20 and Ser21. The segment covering 37-50 has biased composition (low complexity); that stretch reads AAAGPDMGAAGDAP. The helical transmembrane segment at 87–121 threads the bilayer; the sequence is NYRGILNWCVVMLILSNARLFLENLIKYGILVDPI. The Lumenal segment spans residues 122–133; sequence QVVSLFLKDPYS. The tract at residues 122 to 133 is extracellular loop 1 (EL1); the sequence is QVVSLFLKDPYS. A helical transmembrane segment spans residues 134–159; sequence WPAPCLVIAANVFAVAAFQVEKRLAV. Residues 134-491 form an MBOAT fold region; that stretch reads WPAPCLVIAA…LNYEAPVAGA (358 aa). The Cytoplasmic portion of the chain corresponds to 160 to 164; sequence GALTE. A helical membrane pass occupies residues 165–187; that stretch reads QAGLLLHVANLATILCFPAAVVL. Topologically, residues 188–194 are lumenal; it reads LVESITP. The chain crosses the membrane as a helical span at residues 195 to 226; it reads VGSLLALMVHTILFLKLFSYRDVNLWCRRARA. At 227-276 the chain is on the cytoplasmic side; it reads KAASAGKRASSAAAPHTVSYPDNLTYRDLYYFLFAPTLCYELNFPRSPRI. Residues 227 to 279 form an intracellular loop 1 (IL1) region; it reads KAASAGKRASSAAAPHTVSYPDNLTYRDLYYFLFAPTLCYELNFPRSPRIRKR. Residues 277–311 traverse the membrane as a helical segment; sequence RKRFLLRRILEMLFFTQLQVGLIQQWMVPTIQNSM. The Lumenal portion of the chain corresponds to 312–318; it reads KPFKDMD. A helical transmembrane segment spans residues 319–356; that stretch reads YSRIIERLLKLAVPNHLIWLIFFYWLFHSCLNAVAELM. Over 357–402 the chain is Cytoplasmic; the sequence is QFGDREFYRDWWNSESVTYFWQNWNIPVHKWCIRHFYKPMLRRGSS. Positions 357 to 402 are intracellular loop 2 (IL2); that stretch reads QFGDREFYRDWWNSESVTYFWQNWNIPVHKWCIRHFYKPMLRRGSS. Residues 363-369 carry the FYXDWWN motif motif; that stretch reads FYRDWWN. Residues 377 to 385, Tyr393, and Arg407 each bind an acyl-CoA; that span reads WQNWNIPVH. The tract at residues 383–397 is amphipathic helix (AH); the sequence is PVHKWCIRHFYKPML. A helical transmembrane segment spans residues 403–423; it reads RWMARIGVFLASAFFHEYLVS. His418 is a catalytic residue. Topologically, residues 424-431 are lumenal; it reads VPLRMFRL. The helical transmembrane segment at 432-450 threads the bilayer; that stretch reads WAFTGMMAQIPLAWFVGRF. Over 451–452 the chain is Cytoplasmic; sequence FQ. The chain crosses the membrane as a helical span at residues 453–484; it reads GNYGNAAVWLTLIIGQPIAVLMYVHDYYVLNY. Position 480 (Tyr480) interacts with an acyl-CoA. Topologically, residues 485–491 are lumenal; the sequence is EAPVAGA.

Belongs to the membrane-bound acyltransferase family. Sterol o-acyltransferase subfamily. Homodimer or homotetramer; both forms have similar enzymatic activities.

The protein localises to the endoplasmic reticulum membrane. It carries out the reaction an acyl-CoA + a 1,2-diacyl-sn-glycerol = a triacyl-sn-glycerol + CoA. The enzyme catalyses all-trans-retinol + an acyl-CoA = an all-trans-retinyl ester + CoA. The catalysed reaction is 2-(9Z-octadecenoyl)-glycerol + (9Z)-octadecenoyl-CoA = 1,2-di-(9Z-octadecenoyl)-sn-glycerol + CoA. It catalyses the reaction 1,2-di-(9Z-octadecenoyl)-sn-glycerol + (9Z)-octadecenoyl-CoA = 1,2,3-tri-(9Z-octadecenoyl)-glycerol + CoA. It carries out the reaction all-trans-retinol + hexadecanoyl-CoA = all-trans-retinyl hexadecanoate + CoA. The enzyme catalyses 1-O-(9Z-octadecenyl)-glycerol + (9Z)-octadecenoyl-CoA = 1-O-(9Z-octadecyl)-3-(9Z-octadecenoyl)-glycerol + CoA. The catalysed reaction is 1-O-(9Z-octadecyl)-3-(9Z-octadecenoyl)-glycerol + (9Z)-octadecenoyl-CoA = 1-O-(9Z-octadecenyl)-2,3-di-(9Z-octadecenoyl)glycerol + CoA. It catalyses the reaction 1-(9Z-octadecenoyl)-glycerol + (9Z)-octadecenoyl-CoA = 1,2-di-(9Z-octadecenoyl)-glycerol + CoA. It carries out the reaction 1,2-di-(9Z-octadecenoyl)-glycerol + (9Z)-octadecenoate + H(+) = 1,2,3-tri-(9Z-octadecenoyl)-glycerol + H2O. The enzyme catalyses 1-octadecanoyl-2-(5Z,8Z,11Z,14Z-eicosatetraenoyl)-sn-glycerol + (9Z)-octadecenoyl-CoA = 1-octadecanoyl-2-(5Z,8Z,11Z,14Z)-eicosatetraenoyl-3-(9Z)-octadecenoyl-sn-glycerol + CoA. The catalysed reaction is hexadecane-1,2-diol + 2 hexadecanoyl-CoA = 1,2-O,O-dihexadecanoyl-1,2-hexadecanediol + 2 CoA. It catalyses the reaction hexadecane-1,2-diol + hexadecanoyl-CoA = 2-hydroxyhexadecyl hexadecanoate + CoA. It carries out the reaction 2-(9Z-octadecenoyl)-glycerol + hexadecanoyl-CoA = 1-hexadecanoyl-2-(9Z-octadecenoyl)-sn-glycerol + CoA. The enzyme catalyses 1,2-di-(9Z-octadecenoyl)-sn-glycerol + hexadecanoyl-CoA = 1,2-di-(9Z)-octadecenoyl-3-hexadecanoyl-sn-glycerol + CoA. The catalysed reaction is hexadecan-1-ol + hexadecanoyl-CoA = hexadecanyl hexadecanoate + CoA. It catalyses the reaction 13-cis-retinol + hexadecanoyl-CoA = 13-cis-retinyl hexadecanoate + CoA. It carries out the reaction 1,3-di-(9Z-octadecenoyl)-glycerol + (9Z)-octadecenoyl-CoA = 1,2,3-tri-(9Z-octadecenoyl)-glycerol + CoA. The enzyme catalyses 2,3-di-(9Z)-octadecenoyl-sn-glycerol + (9Z)-octadecenoyl-CoA = 1,2,3-tri-(9Z-octadecenoyl)-glycerol + CoA. It participates in lipid metabolism; glycerolipid metabolism. Its function is as follows. Catalyzes the terminal and only committed step in triacylglycerol synthesis by using diacylglycerol and fatty acyl CoA as substrates. Highly expressed in epithelial cells of the small intestine and its activity is essential for the absorption of dietary fats. In liver, plays a role in esterifying exogenous fatty acids to glycerol, and is required to synthesize fat for storage. Also present in female mammary glands, where it produces fat in the milk. May be involved in VLDL (very low density lipoprotein) assembly. In contrast to DGAT2 it is not essential for survival. Functions as the major acyl-CoA retinol acyltransferase (ARAT) in the skin, where it acts to maintain retinoid homeostasis and prevent retinoid toxicity leading to skin and hair disorders. Exhibits additional acyltransferase activities, includin acyl CoA:monoacylglycerol acyltransferase (MGAT), wax monoester and wax diester synthases. Also able to use 1-monoalkylglycerol (1-MAkG) as an acyl acceptor for the synthesis of monoalkyl-monoacylglycerol (MAMAG). In Chlorocebus aethiops (Green monkey), this protein is Diacylglycerol O-acyltransferase 1 (DGAT1).